The primary structure comprises 328 residues: D-cysteine desulfhydrase (328 aa).

The residue at position 51 (K51) is an N6-(pyridoxal phosphate)lysine.

It belongs to the ACC deaminase/D-cysteine desulfhydrase family. In terms of assembly, homodimer. It depends on pyridoxal 5'-phosphate as a cofactor.

The enzyme catalyses D-cysteine + H2O = hydrogen sulfide + pyruvate + NH4(+) + H(+). In terms of biological role, catalyzes the alpha,beta-elimination reaction of D-cysteine and of several D-cysteine derivatives. It could be a defense mechanism against D-cysteine. The protein is D-cysteine desulfhydrase of Shigella flexneri serotype 5b (strain 8401).